The primary structure comprises 121 residues: Large ribosomal subunit protein uL14c (121 aa).

The protein belongs to the universal ribosomal protein uL14 family. Part of the 50S ribosomal subunit.

Its subcellular location is the plastid. It is found in the organellar chromatophore. Functionally, binds to 23S rRNA. In Paulinella chromatophora, this protein is Large ribosomal subunit protein uL14c.